A 243-amino-acid polypeptide reads, in one-letter code: Transmembrane protein 174 (243 aa).

Helical transmembrane passes span 40–60 (LLFS…MGWI) and 73–93 (LLGP…VCKF). The disordered stretch occupies residues 205–229 (AGHDRPSSDADQLEGTQMGEEERVC).

Interacts with SLC34A1; regulates SLC34A1 internalization by PTH and FGF23.

It localises to the endoplasmic reticulum membrane. It is found in the apical cell membrane. In terms of biological role, regulator of plasma phosphate homeostasis. Decreases serum inorganic phosphate (Pi) uptake by regulating the sodium-phosphate cotransporter SLC34A1 trafficking by PTH and FGF23 in the kidney. The protein is Transmembrane protein 174 (Tmem174) of Rattus norvegicus (Rat).